The primary structure comprises 387 residues: S-adenosylmethionine synthase (387 aa).

His17 lines the ATP pocket. Position 19 (Asp19) interacts with Mg(2+). Glu45 lines the K(+) pocket. L-methionine-binding residues include Glu58 and Gln101. The flexible loop stretch occupies residues 101 to 111 (QSADIAMGVDA). ATP is bound by residues 166-168 (DAK), 231-232 (RF), Asp240, 246-247 (RK), Ala263, and Lys267. Asp240 is a binding site for L-methionine. Lys271 is an L-methionine binding site.

It belongs to the AdoMet synthase family. Homotetramer; dimer of dimers. Mg(2+) is required as a cofactor. K(+) serves as cofactor.

The protein localises to the cytoplasm. It carries out the reaction L-methionine + ATP + H2O = S-adenosyl-L-methionine + phosphate + diphosphate. Its pathway is amino-acid biosynthesis; S-adenosyl-L-methionine biosynthesis; S-adenosyl-L-methionine from L-methionine: step 1/1. Its function is as follows. Catalyzes the formation of S-adenosylmethionine (AdoMet) from methionine and ATP. The overall synthetic reaction is composed of two sequential steps, AdoMet formation and the subsequent tripolyphosphate hydrolysis which occurs prior to release of AdoMet from the enzyme. The chain is S-adenosylmethionine synthase from Rhodospirillum centenum (strain ATCC 51521 / SW).